The following is a 313-amino-acid chain: Protein HEXIM2 (313 aa).

The segment covering M1 to S13 has biased composition (polar residues). Residues M1–G78 are disordered. Phosphoserine occurs at positions 28, 52, 75, and 80. The span at S64 to G77 shows a compositional bias: polar residues. Disordered stretches follow at residues E111–P139, P155–E194, and Q267–R313. Basic and acidic residues predominate over residues K112–F131. The interval P139–T142 is interaction with P-TEFb. The span at G179 to E194 shows a compositional bias: basic and acidic residues. Residues R207–G276 are a coiled coil. The tract at residues Q225–S286 is interaction with CCNT1, HEXIM1 and HEXIM2.

It belongs to the HEXIM family. As to quaternary structure, homooligomer and heterooligomer with HEXIM1; probably dimeric. Core component of the 7SK RNP complex, at least composed of 7SK RNA, LARP7, MEPCE, HEXIM1 (or HEXIM2) and P-TEFb (composed of CDK9 and CCNT1/cyclin-T1). Interacts with CCNT2.

Its subcellular location is the nucleus. In terms of biological role, transcriptional regulator which functions as a general RNA polymerase II transcription inhibitor. Core component of the 7SK RNP complex: in cooperation with 7SK snRNA sequesters P-TEFb in a large inactive 7SK snRNP complex preventing RNA polymerase II phosphorylation and subsequent transcriptional elongation. This chain is Protein HEXIM2 (Hexim2), found in Mus musculus (Mouse).